The following is a 258-amino-acid chain: tRNA pseudouridine synthase A (258 aa).

The Nucleophile role is filled by aspartate 54. Residue tyrosine 112 coordinates substrate.

Belongs to the tRNA pseudouridine synthase TruA family. Homodimer.

It carries out the reaction uridine(38/39/40) in tRNA = pseudouridine(38/39/40) in tRNA. In terms of biological role, formation of pseudouridine at positions 38, 39 and 40 in the anticodon stem and loop of transfer RNAs. In Geobacillus kaustophilus (strain HTA426), this protein is tRNA pseudouridine synthase A.